The following is a 449-amino-acid chain: Probable hexaprenyl pyrophosphate synthase, mitochondrial (449 aa).

Isopentenyl diphosphate-binding residues include K122, R125, and H200. The Mg(2+) site is built by D207 and D211. R216 contacts an all-trans-polyprenyl diphosphate. Isopentenyl diphosphate is bound at residue R217. K300, T301, Q338, and K355 together coordinate an all-trans-polyprenyl diphosphate.

This sequence belongs to the FPP/GGPP synthase family. Mg(2+) serves as cofactor.

It localises to the mitochondrion. It participates in cofactor biosynthesis; ubiquinone biosynthesis. Its function is as follows. Assembly of polyisoprenoid side chains. The polyprenyl synthase of coenzyme Q biosynthesis catalyzes the formation from isopentenyl diphosphate of all trans-polyprenyl pyrophosphates generally ranging in length of between 6 and 10 isoprene units depending on the species. In Neurospora crassa (strain ATCC 24698 / 74-OR23-1A / CBS 708.71 / DSM 1257 / FGSC 987), this protein is Probable hexaprenyl pyrophosphate synthase, mitochondrial.